The chain runs to 1036 residues: MIMDNSKTTSKTTLLKLMLLRAWKERWTDCQWGINVKTILTRGVSGDVYNLADAIIQQAVVGSGANMLFLSYLKHSLCAHLISHAAVLNRIAKYDQYDKHHCLIALLDFLKSIIDGVTCRGKQEEAILTKATVSLVHWLLQIYECVLQSYAEDSTLQPEEEEVVQRVAVVLERIVENPFLLGVLSIGKCDDPELFIALQKRFNGISNLTLTTGYVANVGAGNANSLTVTDCMRKLVLLEVDALEMRPFDGGKVEPITYSLQPLIAIEVLLNPMCDTHQYVAQLINLKRLKGFTYARLYCELMRGCLIALNNVEGTAKESLLCAFAFIKVPHILHQLHAKTNGAEQQDEATGATYSVEVLEAFELLLQDTPVLDYMDMKCACNVVECLLKEMVKLQLLTDTHVKQLVALREPVTAGLHKLDANSAPLTMMLKFVFRVESPLAGILKALSTDCSKVQDALLAMLCQVLTGNSLDLVLSVASVEGKFKAFISGLLKCNDYAKQATTAEIGKAPTTRSALFDVSFMILASIAQSYGSDVILAEGGNSFFEKWVRDYMVERKKTKSPMTMVKQADPMVLEELIMAMNNSEGMYVGLKASSLRWEDICYTIPALVHQVLMAWESESIAPLEIKKMLDGLKAYFSTFAVCAASWLCAYMQMVRQDEQLKPMNMVQQLCSALAGPLADEWQQQDYCKERFGLMGQIVRRMQQEFLRTPQVNPKLRALFPSQQQQHVVSHLPLEEQFEEAWKAIAERGWLPIETTFLLDTLLQSCGPAWLVEKLIGKLFVCKYVRDLNKTMDIIFAIMHLDIERCTIALLSQLVPMMLLNKAQTPDIVDPQSRVLAKLCVYCIIVTMETSLTATKKRTRGTASSELEDLDALCTSAKLRKIELDGMGVGCTEAATGGASGTEFSLDSALEPTASAWTTEAASIATLKEPLQSCLQTLFRTFAQHIATDELSPKVYFVFQFLSLLVESGRERIMCVLKLLPNGLVQSLLKINATDEMTVGLILRLYDLNTPSGRQFAMSDICLLRNIQMRKESIKL.

The protein belongs to the Mediator complex subunit 24 family. As to quaternary structure, component of the Mediator complex.

The protein localises to the nucleus. In terms of biological role, component of the Mediator complex, a coactivator involved in the regulated transcription of nearly all RNA polymerase II-dependent genes. Mediator functions as a bridge to convey information from gene-specific regulatory proteins to the basal RNA polymerase II transcription machinery. Mediator is recruited to promoters by direct interactions with regulatory proteins and serves as a scaffold for the assembly of a functional preinitiation complex with RNA polymerase II and the general transcription factors. The protein is Mediator of RNA polymerase II transcription subunit 24 (MED24) of Anopheles gambiae (African malaria mosquito).